A 695-amino-acid polypeptide reads, in one-letter code: Elongation factor G 2 (695 aa).

The region spanning 5-280 is the tr-type G domain; the sequence is SKYRNIGIFA…AVVDYLPSPT (276 aa). GTP is bound by residues 14–21, 78–82, and 132–135; these read AHVDAGKT, DTPGH, and NKLD.

This sequence belongs to the TRAFAC class translation factor GTPase superfamily. Classic translation factor GTPase family. EF-G/EF-2 subfamily.

Its subcellular location is the cytoplasm. Functionally, catalyzes the GTP-dependent ribosomal translocation step during translation elongation. During this step, the ribosome changes from the pre-translocational (PRE) to the post-translocational (POST) state as the newly formed A-site-bound peptidyl-tRNA and P-site-bound deacylated tRNA move to the P and E sites, respectively. Catalyzes the coordinated movement of the two tRNA molecules, the mRNA and conformational changes in the ribosome. In Vibrio vulnificus (strain YJ016), this protein is Elongation factor G 2.